We begin with the raw amino-acid sequence, 222 residues long: Thiol:disulfide interchange protein DsbL (222 aa).

The signal sequence occupies residues 1 to 27; the sequence is MSKLGISSLFKTILLTAALAVSFTASA. Positions 28-221 constitute a Thioredoxin domain; that stretch reads FTEGTDYMVL…MADLIRELAS (194 aa). A disulfide bridge connects residues C56 and C59.

The protein belongs to the thioredoxin family. DsbL subfamily. As to quaternary structure, interacts with DsbI.

It localises to the periplasm. In terms of biological role, involved in disulfide-bond formation. Acts by transferring its disulfide bond to other proteins. Part of a redox system composed of DsbI and DsbL that mediates formation of an essential disulfide bond in AssT. This chain is Thiol:disulfide interchange protein DsbL, found in Escherichia coli O6:H1 (strain CFT073 / ATCC 700928 / UPEC).